A 99-amino-acid chain; its full sequence is NADH-ubiquinone oxidoreductase chain 4L (99 aa).

3 consecutive transmembrane segments (helical) span residues 4–24 (MFLM…VFVS), 29–49 (LLST…FLFF), and 63–83 (FFLT…VSMI).

It belongs to the complex I subunit 4L family.

The protein localises to the mitochondrion membrane. The catalysed reaction is a ubiquinone + NADH + 5 H(+)(in) = a ubiquinol + NAD(+) + 4 H(+)(out). Core subunit of the mitochondrial membrane respiratory chain NADH dehydrogenase (Complex I) that is believed to belong to the minimal assembly required for catalysis. Complex I functions in the transfer of electrons from NADH to the respiratory chain. The immediate electron acceptor for the enzyme is believed to be ubiquinone. In Anopheles gambiae (African malaria mosquito), this protein is NADH-ubiquinone oxidoreductase chain 4L (mt:ND4L).